We begin with the raw amino-acid sequence, 334 residues long: Protein-methionine-sulfoxide reductase catalytic subunit MsrP (334 aa).

The tat-type signal signal peptide spans methionine 1–alanine 44. Mo-molybdopterin-binding positions include asparagine 88, tyrosine 91–glutamate 92, cysteine 146, threonine 181, asparagine 233, arginine 238, and glycine 249–lysine 251.

This sequence belongs to the MsrP family. In terms of assembly, heterodimer of a catalytic subunit (MsrP) and a heme-binding subunit (MsrQ). It depends on Mo-molybdopterin as a cofactor. Predicted to be exported by the Tat system. The position of the signal peptide cleavage has not been experimentally proven.

It localises to the periplasm. The enzyme catalyses L-methionyl-[protein] + a quinone + H2O = L-methionyl-(S)-S-oxide-[protein] + a quinol. It catalyses the reaction L-methionyl-[protein] + a quinone + H2O = L-methionyl-(R)-S-oxide-[protein] + a quinol. Part of the MsrPQ system that repairs oxidized periplasmic proteins containing methionine sulfoxide residues (Met-O), using respiratory chain electrons. Thus protects these proteins from oxidative-stress damage caused by reactive species of oxygen and chlorine generated by the host defense mechanisms. MsrPQ is essential for the maintenance of envelope integrity under bleach stress, rescuing a wide series of structurally unrelated periplasmic proteins from methionine oxidation, including the primary periplasmic chaperone SurA and the lipoprotein Pal. The catalytic subunit MsrP is non-stereospecific, being able to reduce both (R-) and (S-) diastereoisomers of methionine sulfoxide. The sequence is that of Protein-methionine-sulfoxide reductase catalytic subunit MsrP from Salmonella arizonae (strain ATCC BAA-731 / CDC346-86 / RSK2980).